Reading from the N-terminus, the 79-residue chain is Small ribosomal subunit protein eS17 (79 aa).

It belongs to the eukaryotic ribosomal protein eS17 family.

This is Small ribosomal subunit protein eS17 from Saccharolobus solfataricus (strain ATCC 35092 / DSM 1617 / JCM 11322 / P2) (Sulfolobus solfataricus).